Consider the following 522-residue polypeptide: Sulfite reductase [NADPH] flavoprotein alpha-component (522 aa).

In terms of domain architecture, Flavodoxin-like spans 60 to 198; sequence ITILFGSQTG…DTERWSSDAL (139 aa). Residues 217–242 form a disordered region; that stretch reads TLRSHQDLRSHQEQSRNRARPYDKDN. The span at 220-242 shows a compositional bias: basic and acidic residues; sequence SHQDLRSHQEQSRNRARPYDKDN. In terms of domain architecture, FAD-binding FR-type spans 241–399; it reads DNPYTATLLE…VAPYRAFLQQ (159 aa).

Alpha(8)-beta(8). The alpha component is a flavoprotein, the beta component is a hemoprotein. Requires FAD as cofactor. FMN is required as a cofactor.

The enzyme catalyses hydrogen sulfide + 3 NADP(+) + 3 H2O = sulfite + 3 NADPH + 4 H(+). Catalyzes the 6-electron reduction of sulfite to sulfide. This is one of several activities required for the biosynthesis of L-cysteine from sulfate. The flavo-protein component catalyzes the electron flow from NADPH -&gt; FAD -&gt; FMN to the hemoprotein component. This Thiocapsa roseopersicina protein is Sulfite reductase [NADPH] flavoprotein alpha-component (cysJ).